The primary structure comprises 489 residues: Cobyric acid synthase (489 aa).

Positions 247–439 (ALKVVVPVLP…IHGVFDEPAA (193 aa)) constitute a GATase cobBQ-type domain. C328 (nucleophile) is an active-site residue. H431 is an active-site residue.

It belongs to the CobB/CobQ family. CobQ subfamily.

It functions in the pathway cofactor biosynthesis; adenosylcobalamin biosynthesis. In terms of biological role, catalyzes amidations at positions B, D, E, and G on adenosylcobyrinic A,C-diamide. NH(2) groups are provided by glutamine, and one molecule of ATP is hydrogenolyzed for each amidation. The sequence is that of Cobyric acid synthase from Marinobacter nauticus (strain ATCC 700491 / DSM 11845 / VT8) (Marinobacter aquaeolei).